Here is a 118-residue protein sequence, read N- to C-terminus: Large ribosomal subunit protein bL20 (118 aa).

The protein belongs to the bacterial ribosomal protein bL20 family.

In terms of biological role, binds directly to 23S ribosomal RNA and is necessary for the in vitro assembly process of the 50S ribosomal subunit. It is not involved in the protein synthesizing functions of that subunit. The sequence is that of Large ribosomal subunit protein bL20 from Protochlamydia amoebophila (strain UWE25).